Here is a 453-residue protein sequence, read N- to C-terminus: Glutamyl-tRNA(Gln) amidotransferase subunit A (453 aa).

Active-site charge relay system residues include Lys-53 and Ser-128. Ser-152 functions as the Acyl-ester intermediate in the catalytic mechanism.

Belongs to the amidase family. GatA subfamily. As to quaternary structure, heterotrimer of A, B and C subunits.

It catalyses the reaction L-glutamyl-tRNA(Gln) + L-glutamine + ATP + H2O = L-glutaminyl-tRNA(Gln) + L-glutamate + ADP + phosphate + H(+). In terms of biological role, allows the formation of correctly charged Gln-tRNA(Gln) through the transamidation of misacylated Glu-tRNA(Gln) in organisms which lack glutaminyl-tRNA synthetase. The reaction takes place in the presence of glutamine and ATP through an activated gamma-phospho-Glu-tRNA(Gln). The sequence is that of Glutamyl-tRNA(Gln) amidotransferase subunit A from Helicobacter pylori (strain G27).